The chain runs to 751 residues: Lysine decarboxylase LdcA (751 aa).

This sequence belongs to the Orn/Lys/Arg decarboxylase class-I family. In terms of assembly, homodecamer.

The enzyme catalyses L-lysine + H(+) = cadaverine + CO2. Functionally, plays an essential role in lysine utilization by acting as a lysine decarboxylase. The chain is Lysine decarboxylase LdcA from Pseudomonas aeruginosa (strain ATCC 15692 / DSM 22644 / CIP 104116 / JCM 14847 / LMG 12228 / 1C / PRS 101 / PAO1).